Reading from the N-terminus, the 420-residue chain is Putative U-box domain-containing protein 58 (420 aa).

The 165-residue stretch at 4–168 (NSYVLFARLC…EDALAMKKED (165 aa)) folds into the MIF4G domain. The stretch at 139 to 352 (SRVVELEGNY…TAKEQMEKRQ (214 aa)) forms a coiled coil. The region spanning 352-420 (QPPSSFFCPI…ALRSAIEELV (69 aa)) is the U-box domain.

The catalysed reaction is S-ubiquitinyl-[E2 ubiquitin-conjugating enzyme]-L-cysteine + [acceptor protein]-L-lysine = [E2 ubiquitin-conjugating enzyme]-L-cysteine + N(6)-ubiquitinyl-[acceptor protein]-L-lysine.. The protein operates within protein modification; protein ubiquitination. Functions as an E3 ubiquitin ligase. The polypeptide is Putative U-box domain-containing protein 58 (PUB58) (Arabidopsis thaliana (Mouse-ear cress)).